A 171-amino-acid polypeptide reads, in one-letter code: MNHEHPDIESQQSAADAAAAAGVNDEVERLRAELDQVKADVLRERADLENQRKRVARDIEQARKFANEKLLGELLPVFDSLDAGLKAAGDDAHPLREGLELTYRQLLKVAGDNGLVLLDPTGQPFNPEHHQAISQVPTPGAAPGSVVTVFQKGYLLNERLLRPALVVVAAD.

The interval 1–22 (MNHEHPDIESQQSAADAAAAAG) is disordered.

The protein belongs to the GrpE family. As to quaternary structure, homodimer.

It is found in the cytoplasm. Participates actively in the response to hyperosmotic and heat shock by preventing the aggregation of stress-denatured proteins, in association with DnaK and GrpE. It is the nucleotide exchange factor for DnaK and may function as a thermosensor. Unfolded proteins bind initially to DnaJ; upon interaction with the DnaJ-bound protein, DnaK hydrolyzes its bound ATP, resulting in the formation of a stable complex. GrpE releases ADP from DnaK; ATP binding to DnaK triggers the release of the substrate protein, thus completing the reaction cycle. Several rounds of ATP-dependent interactions between DnaJ, DnaK and GrpE are required for fully efficient folding. This chain is Protein GrpE, found in Stenotrophomonas maltophilia (strain R551-3).